We begin with the raw amino-acid sequence, 595 residues long: Adenine deaminase 2 (595 aa).

Belongs to the metallo-dependent hydrolases superfamily. Adenine deaminase family. Mn(2+) serves as cofactor.

It carries out the reaction adenine + H2O + H(+) = hypoxanthine + NH4(+). This chain is Adenine deaminase 2, found in Rhizobium etli (strain ATCC 51251 / DSM 11541 / JCM 21823 / NBRC 15573 / CFN 42).